The following is a 227-amino-acid chain: Cytochrome c oxidase subunit 2 (227 aa).

Residues 1 to 26 (MATWSNLSLQDGASPLMEQLSFFHDH) lie on the Mitochondrial intermembrane side of the membrane. A helical membrane pass occupies residues 27–48 (TMIDLLLITMIVGYSLSYMLLT). The Mitochondrial matrix segment spans residues 49–62 (KYTNRNMLHGHLIE). Residues 63-82 (TIWTALPAITLIFIALPSLR) traverse the membrane as a helical segment. The Mitochondrial intermembrane segment spans residues 83–227 (LLYLLDDSSD…LFIKWLSNMM (145 aa)). Cu cation-binding residues include H161, C196, E198, C200, H204, and M207. E198 is a binding site for Mg(2+).

The protein belongs to the cytochrome c oxidase subunit 2 family. As to quaternary structure, component of the cytochrome c oxidase (complex IV, CIV), a multisubunit enzyme composed of a catalytic core of 3 subunits and several supernumerary subunits. The complex exists as a monomer or a dimer and forms supercomplexes (SCs) in the inner mitochondrial membrane with ubiquinol-cytochrome c oxidoreductase (cytochrome b-c1 complex, complex III, CIII). Cu cation is required as a cofactor.

The protein localises to the mitochondrion inner membrane. It carries out the reaction 4 Fe(II)-[cytochrome c] + O2 + 8 H(+)(in) = 4 Fe(III)-[cytochrome c] + 2 H2O + 4 H(+)(out). Its function is as follows. Component of the cytochrome c oxidase, the last enzyme in the mitochondrial electron transport chain which drives oxidative phosphorylation. The respiratory chain contains 3 multisubunit complexes succinate dehydrogenase (complex II, CII), ubiquinol-cytochrome c oxidoreductase (cytochrome b-c1 complex, complex III, CIII) and cytochrome c oxidase (complex IV, CIV), that cooperate to transfer electrons derived from NADH and succinate to molecular oxygen, creating an electrochemical gradient over the inner membrane that drives transmembrane transport and the ATP synthase. Cytochrome c oxidase is the component of the respiratory chain that catalyzes the reduction of oxygen to water. Electrons originating from reduced cytochrome c in the intermembrane space (IMS) are transferred via the dinuclear copper A center (CU(A)) of subunit 2 and heme A of subunit 1 to the active site in subunit 1, a binuclear center (BNC) formed by heme A3 and copper B (CU(B)). The BNC reduces molecular oxygen to 2 water molecules using 4 electrons from cytochrome c in the IMS and 4 protons from the mitochondrial matrix. The polypeptide is Cytochrome c oxidase subunit 2 (COII) (Locusta migratoria (Migratory locust)).